The following is a 178-amino-acid chain: UPF0302 protein BCAH187_A1683 (178 aa).

The protein belongs to the UPF0302 family.

The protein is UPF0302 protein BCAH187_A1683 of Bacillus cereus (strain AH187).